A 137-amino-acid chain; its full sequence is uncharacterized protein (137 aa).

The disordered stretch occupies residues 1–26 (MKDKMWCEDTAQPHRRLPAPPSSSSP).

This is an uncharacterized protein from Homo sapiens (Human).